Reading from the N-terminus, the 219-residue chain is 2-phospho-L-lactate guanylyltransferase (219 aa).

The protein belongs to the CofC family. In terms of assembly, homodimer.

The catalysed reaction is (2S)-2-phospholactate + GTP + H(+) = (2S)-lactyl-2-diphospho-5'-guanosine + diphosphate. It participates in cofactor biosynthesis; coenzyme F420 biosynthesis. In terms of biological role, guanylyltransferase that catalyzes the activation of (2S)-2-phospholactate (2-PL) as (2S)-lactyl-2-diphospho-5'-guanosine, via the condensation of 2-PL with GTP. It is involved in the biosynthesis of coenzyme F420, a hydride carrier cofactor. This Methanocaldococcus vulcanius (strain ATCC 700851 / DSM 12094 / M7) (Methanococcus vulcanius) protein is 2-phospho-L-lactate guanylyltransferase.